The primary structure comprises 496 residues: Probable cytosol aminopeptidase (496 aa).

Mn(2+) is bound by residues K251 and D256. K263 is an active-site residue. Mn(2+) is bound by residues D274, D333, and E335. The active site involves R337.

This sequence belongs to the peptidase M17 family. It depends on Mn(2+) as a cofactor.

Its subcellular location is the cytoplasm. It carries out the reaction Release of an N-terminal amino acid, Xaa-|-Yaa-, in which Xaa is preferably Leu, but may be other amino acids including Pro although not Arg or Lys, and Yaa may be Pro. Amino acid amides and methyl esters are also readily hydrolyzed, but rates on arylamides are exceedingly low.. The catalysed reaction is Release of an N-terminal amino acid, preferentially leucine, but not glutamic or aspartic acids.. Functionally, presumably involved in the processing and regular turnover of intracellular proteins. Catalyzes the removal of unsubstituted N-terminal amino acids from various peptides. In Acidovorax sp. (strain JS42), this protein is Probable cytosol aminopeptidase.